The primary structure comprises 142 residues: Hemoglobin subunit zeta (142 aa).

Ser-2 is modified (N-acetylserine). The 141-residue stretch at 2 to 142 folds into the Globin domain; it reads SLTKTEGTII…VSSVLTEKYR (141 aa). A Phosphothreonine modification is found at Thr-29. Ser-53 bears the Phosphoserine mark. His-59 is a heme b binding site. Phosphoserine is present on residues Ser-73 and Ser-82. His-88 serves as a coordination point for heme b.

Belongs to the globin family. In terms of assembly, heterotetramer of two zeta chains and beta-type chains.

In terms of biological role, the zeta chain is an alpha-type chain of mammalian embryonic hemoglobin. The sequence is that of Hemoglobin subunit zeta (HBZ1) from Pan troglodytes (Chimpanzee).